Reading from the N-terminus, the 571-residue chain is Isocitrate dehydrogenase kinase/phosphatase 2 (571 aa).

ATP-binding positions include 313–319 and lysine 334; that span reads APGTPGM. The active site involves aspartate 369.

Belongs to the AceK family.

Its subcellular location is the cytoplasm. It catalyses the reaction L-seryl-[isocitrate dehydrogenase] + ATP = O-phospho-L-seryl-[isocitrate dehydrogenase] + ADP + H(+). Its function is as follows. Bifunctional enzyme which can phosphorylate or dephosphorylate isocitrate dehydrogenase (IDH) on a specific serine residue. This is a regulatory mechanism which enables bacteria to bypass the Krebs cycle via the glyoxylate shunt in response to the source of carbon. When bacteria are grown on glucose, IDH is fully active and unphosphorylated, but when grown on acetate or ethanol, the activity of IDH declines drastically concomitant with its phosphorylation. The chain is Isocitrate dehydrogenase kinase/phosphatase 2 from Pseudoalteromonas translucida (strain TAC 125).